We begin with the raw amino-acid sequence, 507 residues long: ATP synthase subunit alpha (507 aa).

Residue 171–178 coordinates ATP; sequence GDRQTGKT.

The protein belongs to the ATPase alpha/beta chains family. F-type ATPases have 2 components, CF(1) - the catalytic core - and CF(0) - the membrane proton channel. CF(1) has five subunits: alpha(3), beta(3), gamma(1), delta(1), epsilon(1). CF(0) has three main subunits: a(1), b(2) and c(9-12). The alpha and beta chains form an alternating ring which encloses part of the gamma chain. CF(1) is attached to CF(0) by a central stalk formed by the gamma and epsilon chains, while a peripheral stalk is formed by the delta and b chains.

The protein localises to the cell inner membrane. The catalysed reaction is ATP + H2O + 4 H(+)(in) = ADP + phosphate + 5 H(+)(out). Functionally, produces ATP from ADP in the presence of a proton gradient across the membrane. The alpha chain is a regulatory subunit. This is ATP synthase subunit alpha from Bdellovibrio bacteriovorus (strain ATCC 15356 / DSM 50701 / NCIMB 9529 / HD100).